The chain runs to 228 residues: Small ribosomal subunit protein uS3 (228 aa).

The KH type-2 domain maps to 39 to 107 (VRAYLQDKLK…PVHINIEEIR (69 aa)).

The protein belongs to the universal ribosomal protein uS3 family. As to quaternary structure, part of the 30S ribosomal subunit. Forms a tight complex with proteins S10 and S14.

Binds the lower part of the 30S subunit head. Binds mRNA in the 70S ribosome, positioning it for translation. The polypeptide is Small ribosomal subunit protein uS3 (Ectopseudomonas mendocina (strain ymp) (Pseudomonas mendocina)).